A 426-amino-acid polypeptide reads, in one-letter code: Histidine--tRNA ligase (426 aa).

It belongs to the class-II aminoacyl-tRNA synthetase family.

The protein localises to the cytoplasm. The catalysed reaction is tRNA(His) + L-histidine + ATP = L-histidyl-tRNA(His) + AMP + diphosphate + H(+). The polypeptide is Histidine--tRNA ligase (Saccharolobus islandicus (strain Y.N.15.51 / Yellowstone #2) (Sulfolobus islandicus)).